The primary structure comprises 416 residues: Homogentisate 1,2-dioxygenase (416 aa).

The active-site Proton acceptor is His-275. Fe cation contacts are provided by His-318 and Glu-324. Homogentisate contacts are provided by Tyr-333 and His-354. A Fe cation-binding site is contributed by His-354.

It belongs to the homogentisate dioxygenase family. In terms of assembly, hexamer; dimer of trimers. Requires Fe cation as cofactor.

The enzyme catalyses homogentisate + O2 = 4-maleylacetoacetate + H(+). The protein operates within amino-acid degradation; L-phenylalanine degradation; acetoacetate and fumarate from L-phenylalanine: step 4/6. Its function is as follows. Involved in the catabolism of homogentisate (2,5-dihydroxyphenylacetate or 2,5-OH-PhAc), a central intermediate in the degradation of phenylalanine and tyrosine. Catalyzes the oxidative ring cleavage of the aromatic ring of homogentisate to yield maleylacetoacetate. The polypeptide is Homogentisate 1,2-dioxygenase (Legionella pneumophila (strain Corby)).